The chain runs to 467 residues: Methylenetetrahydrofolate--tRNA-(uracil-5-)-methyltransferase TrmFO (467 aa).

11 to 16 (GAGLAG) provides a ligand contact to FAD.

Belongs to the MnmG family. TrmFO subfamily. FAD is required as a cofactor.

The protein localises to the cytoplasm. It catalyses the reaction uridine(54) in tRNA + (6R)-5,10-methylene-5,6,7,8-tetrahydrofolate + NADH + H(+) = 5-methyluridine(54) in tRNA + (6S)-5,6,7,8-tetrahydrofolate + NAD(+). The catalysed reaction is uridine(54) in tRNA + (6R)-5,10-methylene-5,6,7,8-tetrahydrofolate + NADPH + H(+) = 5-methyluridine(54) in tRNA + (6S)-5,6,7,8-tetrahydrofolate + NADP(+). Functionally, catalyzes the folate-dependent formation of 5-methyl-uridine at position 54 (M-5-U54) in all tRNAs. In Prochlorococcus marinus (strain NATL1A), this protein is Methylenetetrahydrofolate--tRNA-(uracil-5-)-methyltransferase TrmFO.